Here is a 760-residue protein sequence, read N- to C-terminus: Molybdenum cofactor sulfurase 2 (760 aa).

K223 bears the N6-(pyridoxal phosphate)lysine mark. C389 is an active-site residue. The MOSC domain maps to 608-758 (QSDDEARTLR…LHCGSPLQVV (151 aa)).

The protein belongs to the class-V pyridoxal-phosphate-dependent aminotransferase family. MOCOS subfamily. Pyridoxal 5'-phosphate is required as a cofactor.

It catalyses the reaction Mo-molybdopterin + L-cysteine + AH2 = thio-Mo-molybdopterin + L-alanine + A + H2O. In terms of biological role, sulfurates the molybdenum cofactor. Sulfation of molybdenum is essential for xanthine dehydrogenase (XDH) and aldehyde oxidase (ADO) enzymes in which molybdenum cofactor is liganded by 1 oxygen and 1 sulfur atom in active form. The polypeptide is Molybdenum cofactor sulfurase 2 (Culex quinquefasciatus (Southern house mosquito)).